Consider the following 508-residue polypeptide: Photosystem II CP47 reaction center protein (508 aa).

6 helical membrane passes run 21 to 36 (SVHI…WAGS), 101 to 115 (IVFS…IWHW), 140 to 156 (GIHL…FGVF), 203 to 218 (IAAG…FHLS), 237 to 252 (VLSS…AFVV), and 457 to 472 (SFAL…HGAR).

The protein belongs to the PsbB/PsbC family. PsbB subfamily. PSII is composed of 1 copy each of membrane proteins PsbA, PsbB, PsbC, PsbD, PsbE, PsbF, PsbH, PsbI, PsbJ, PsbK, PsbL, PsbM, PsbT, PsbX, PsbY, PsbZ, Psb30/Ycf12, at least 3 peripheral proteins of the oxygen-evolving complex and a large number of cofactors. It forms dimeric complexes. It depends on Binds multiple chlorophylls. PSII binds additional chlorophylls, carotenoids and specific lipids. as a cofactor.

The protein localises to the plastid. It is found in the chloroplast thylakoid membrane. Functionally, one of the components of the core complex of photosystem II (PSII). It binds chlorophyll and helps catalyze the primary light-induced photochemical processes of PSII. PSII is a light-driven water:plastoquinone oxidoreductase, using light energy to abstract electrons from H(2)O, generating O(2) and a proton gradient subsequently used for ATP formation. The polypeptide is Photosystem II CP47 reaction center protein (Jasminum nudiflorum (Winter jasmine)).